We begin with the raw amino-acid sequence, 375 residues long: Neuropeptide Y receptor type 4 (375 aa).

The Extracellular segment spans residues 1–39 (MNTSHFLAPLFPGSLQGKNGTNPLDSPYNFSDGCQDSAE). Residues Asn2, Asn19, and Asn29 are each glycosylated (N-linked (GlcNAc...) asparagine). The chain crosses the membrane as a helical span at residues 40-60 (LLAFIITTYSIETILGVLGNL). Residues 61–78 (CLIFVTTRQKEKSNVTNL) are Cytoplasmic-facing. A helical transmembrane segment spans residues 79-99 (LIANLAFSDFLMCLICQPLTV). Over 100-116 (TYTIMDYWIFGEVLCKM) the chain is Extracellular. A disulfide bond links Cys114 and Cys201. Residues 117-137 (LTFIQCMSVTVSILSLVLVAL) traverse the membrane as a helical segment. Residues 138-155 (ERHQLIINPTGWKPSIFQ) lie on the Cytoplasmic side of the membrane. Residues 156 to 176 (AYLGIVVIWFVSCFLSLPFLA) traverse the membrane as a helical segment. Residues 177-211 (NSTLNDLFHYNHSKVVEFLEDKVVCFVSWSSDHHR) lie on the Extracellular side of the membrane. Asn187 carries an N-linked (GlcNAc...) asparagine glycan. A helical membrane pass occupies residues 212–232 (LIYTTFLLLFQYCIPLAFILV). Residues 233–266 (CYIRIYQRLQRQKHVFHAHACSSRAGQMKRINSM) are Cytoplasmic-facing. A helical transmembrane segment spans residues 267 to 287 (LMTMVTAFAVLWLPLHVFNTL). Topologically, residues 288–301 (EDWYQEAIPACHGN) are extracellular. A helical transmembrane segment spans residues 302–322 (LIFLMCHLLAMASTCVNPFIY). Residues 323–375 (GFLNINFKKDIKALVLTCHCRSPRGESEHLPLSTVHTDLSKGSMRMGSKSNFI) lie on the Cytoplasmic side of the membrane. Residue Cys340 is the site of S-palmitoyl cysteine attachment.

The protein belongs to the G-protein coupled receptor 1 family. Heart, detected in small intestine.

The protein resides in the cell membrane. Functionally, g protein-coupled receptor for PPY/pancreatic polypeptide/PP that is negatively coupled to cAMP. Has much lower affinity for the NPY/neuropeptide Y and PYY/peptide YY. The protein is Neuropeptide Y receptor type 4 (Npy4r) of Mus musculus (Mouse).